Reading from the N-terminus, the 181-residue chain is Oligoribonuclease (181 aa).

The Exonuclease domain occupies 8 to 171; that stretch reads LVWIDMEMTG…DDIRESIAEL (164 aa). The active site involves tyrosine 129.

This sequence belongs to the oligoribonuclease family.

Its subcellular location is the cytoplasm. In terms of biological role, 3'-to-5' exoribonuclease specific for small oligoribonucleotides. The chain is Oligoribonuclease from Aeromonas hydrophila subsp. hydrophila (strain ATCC 7966 / DSM 30187 / BCRC 13018 / CCUG 14551 / JCM 1027 / KCTC 2358 / NCIMB 9240 / NCTC 8049).